The chain runs to 131 residues: Leptin receptor overlapping transcript-like 1 (131 aa).

The next 4 membrane-spanning stretches (helical) occupy residues 7–27, 32–52, 69–89, and 100–120; these read LISLSFGGAIGLMFLMLGCAL, QYWPLFVLFFYILSPIPYCIA, LAIFLTTGIVVSAFGLPIVFA, and ALVLTGNTVIFATILGFFLVF.

This sequence belongs to the OB-RGRP/VPS55 family.

The protein localises to the membrane. Its function is as follows. Negatively regulates growth hormone (GH) receptor cell surface expression in liver. May play a role in liver resistance to GH during periods of reduced nutrient availability. The sequence is that of Leptin receptor overlapping transcript-like 1 (LEPROTL1) from Bos taurus (Bovine).